The following is a 445-amino-acid chain: Phosphoglucosamine mutase (445 aa).

The Phosphoserine intermediate role is filled by Ser-102. The Mg(2+) site is built by Ser-102, Asp-241, Asp-243, and Asp-245. A Phosphoserine modification is found at Ser-102.

This sequence belongs to the phosphohexose mutase family. The cofactor is Mg(2+). Activated by phosphorylation.

It catalyses the reaction alpha-D-glucosamine 1-phosphate = D-glucosamine 6-phosphate. Its function is as follows. Catalyzes the conversion of glucosamine-6-phosphate to glucosamine-1-phosphate. This is Phosphoglucosamine mutase from Shewanella baltica (strain OS155 / ATCC BAA-1091).